The following is a 130-amino-acid chain: Cysteine methyltransferase (130 aa).

It catalyses the reaction [trehalose-6-phosphate synthase]-L-cysteine + S-adenosyl-L-methionine = [trehalose-6-phosphate synthase]-S-methyl-L-cysteine + S-adenosyl-L-homocysteine + H(+). In terms of biological role, S-adenosyl-L-methionine-dependent protein-cysteine S-methyltransferase with broad substrate specificity. Methylates trehalose-6-phosphate synthase (TPS), enhancing its enzymatic activity and promoting trehalose synthesis upon entry of cells into stationary phase. This is Cysteine methyltransferase from Saccharomyces cerevisiae (Baker's yeast).